We begin with the raw amino-acid sequence, 313 residues long: Fe-S cluster assembly protein dre2 (313 aa).

2 disordered regions span residues 1–25 and 151–187; these read MSIT…SQKR and GRKK…AQNN. The N-terminal SAM-like domain stretch occupies residues 20–145; the sequence is NGSQKRNLLL…FEKPVQEAAV (126 aa). The interval 146–203 is linker; sequence PLKLGGRKKKDKTNGVNGVQNGVATNGASTNGVGMFDPAQNNDDELIDEDALLSDDDL. Residues 159 to 177 show a composition bias toward polar residues; it reads NGVNGVQNGVATNGASTNG. 4 residues coordinate [2Fe-2S] cluster: Cys213, Cys225, Cys228, and Cys230. The tract at residues 213-230 is fe-S binding site A; that stretch reads CVPETAKKRRRPCKDCTC. Cys276, Cys279, Cys287, and Cys290 together coordinate [4Fe-4S] cluster. Short sequence motifs (cx2C motif) lie at residues 276–279 and 287–290; these read CNSC and CSSC. Residues 276–290 are fe-S binding site B; it reads CNSCSLGDAFRCSSC.

The protein belongs to the anamorsin family. Monomer. Interacts with tah18. Interacts with mia40. [2Fe-2S] cluster is required as a cofactor. [4Fe-4S] cluster serves as cofactor.

It is found in the cytoplasm. The protein resides in the mitochondrion intermembrane space. Component of the cytosolic iron-sulfur (Fe-S) protein assembly (CIA) machinery required for the maturation of extramitochondrial Fe-S proteins. Part of an electron transfer chain functioning in an early step of cytosolic Fe-S biogenesis, facilitating the de novo assembly of a [4Fe-4S] cluster on the scaffold complex cfd1-nbp35. Electrons are transferred to dre2 from NADPH via the FAD- and FMN-containing protein tah18. Tah18-dre2 are also required for the assembly of the diferric tyrosyl radical cofactor of ribonucleotide reductase (RNR), probably by providing electrons for reduction during radical cofactor maturation in the catalytic small subunit rnr2. The polypeptide is Fe-S cluster assembly protein dre2 (Aspergillus flavus (strain ATCC 200026 / FGSC A1120 / IAM 13836 / NRRL 3357 / JCM 12722 / SRRC 167)).